The chain runs to 926 residues: Protein translocase subunit SecA (926 aa).

Residues Gln-87, 105-109 (GEGKT), and Asp-512 each bind ATP. Zn(2+)-binding residues include Cys-911, Cys-913, Cys-922, and His-923.

This sequence belongs to the SecA family. As to quaternary structure, monomer and homodimer. Part of the essential Sec protein translocation apparatus which comprises SecA, SecYEG and auxiliary proteins SecDF-YajC and YidC. Zn(2+) is required as a cofactor.

It localises to the cell inner membrane. It is found in the cytoplasm. The enzyme catalyses ATP + H2O + cellular proteinSide 1 = ADP + phosphate + cellular proteinSide 2.. Functionally, part of the Sec protein translocase complex. Interacts with the SecYEG preprotein conducting channel. Has a central role in coupling the hydrolysis of ATP to the transfer of proteins into and across the cell membrane, serving both as a receptor for the preprotein-SecB complex and as an ATP-driven molecular motor driving the stepwise translocation of polypeptide chains across the membrane. This Psychrobacter cryohalolentis (strain ATCC BAA-1226 / DSM 17306 / VKM B-2378 / K5) protein is Protein translocase subunit SecA.